The sequence spans 157 residues: Histone H2B.3 (157 aa).

Positions Met1–Val64 are disordered. Residues Lys26–Lys42 show a composition bias toward basic residues. A Glycyl lysine isopeptide (Lys-Gly) (interchain with G-Cter in ubiquitin) cross-link involves residue Lys153.

This sequence belongs to the histone H2B family. As to quaternary structure, the nucleosome is a histone octamer containing two molecules each of H2A, H2B, H3 and H4 assembled in one H3-H4 heterotetramer and two H2A-H2B heterodimers. The octamer wraps approximately 147 bp of DNA. Post-translationally, monoubiquitinated to form H2BK143ub1; may give a specific tag for epigenetic transcriptional activation.

The protein resides in the nucleus. It is found in the chromosome. In terms of biological role, core component of nucleosome. Nucleosomes wrap and compact DNA into chromatin, limiting DNA accessibility to the cellular machineries which require DNA as a template. Histones thereby play a central role in transcription regulation, DNA repair, DNA replication and chromosomal stability. DNA accessibility is regulated via a complex set of post-translational modifications of histones, also called histone code, and nucleosome remodeling. The polypeptide is Histone H2B.3 (Volvox carteri (Green alga)).